The chain runs to 484 residues: Endoglucanase 3 (484 aa).

Positions 1–21 are cleaved as a signal peptide; sequence MASPFFFVFLLSALSLENTYA. The Nucleophile role is filled by Asp77. Asn370 is a glycosylation site (N-linked (GlcNAc...) asparagine). Residues His402, Asp453, and Glu462 contribute to the active site.

Belongs to the glycosyl hydrolase 9 (cellulase E) family. As to expression, specifically expressed in root cap cells.

Its subcellular location is the secreted. It catalyses the reaction Endohydrolysis of (1-&gt;4)-beta-D-glucosidic linkages in cellulose, lichenin and cereal beta-D-glucans.. Functionally, may be involved in the sloughing (cell-cell separation) of the root cap cells from root tip. This Arabidopsis thaliana (Mouse-ear cress) protein is Endoglucanase 3 (CEL5).